A 313-amino-acid chain; its full sequence is Protein FixB (313 aa).

FAD is bound at residue 255-283 (LYLAVGISGQIQHMVGANASQTIFAINKD).

It belongs to the ETF alpha-subunit/FixB family. As to quaternary structure, heterodimer of FixA and FixB.

Its pathway is amine and polyamine metabolism; carnitine metabolism. Its function is as follows. Required for anaerobic carnitine reduction. May bring reductant to CaiA. This Escherichia coli O1:K1 / APEC protein is Protein FixB.